The chain runs to 42 residues: Potassium channel toxin gamma-KTx 1.8 (42 aa).

4 disulfides stabilise this stretch: Cys5–Cys23, Cys11–Cys34, Cys20–Cys39, and Cys24–Cys41.

The protein belongs to the ergtoxin family. Gamma-KTx 1 subfamily. As to expression, expressed by the venom gland.

It localises to the secreted. Its function is as follows. Blocks in a reversible manner human and rat Kv11.1/KCNH2/ERG1 potassium channels. Also completely and irreversibly blocks rat Kv11.2/KCNH6/ERG2 and human Kv11.3/KCNH7/ERG3 channels. Also weakly inhibits Kir2.1/KCNJ2 and Kv1.2/KCNA2 potassium channels. The polypeptide is Potassium channel toxin gamma-KTx 1.8 (Centruroides elegans (Bark scorpion)).